A 1222-amino-acid polypeptide reads, in one-letter code: MLFNINEKGEPLVISFAPFLSPEAIKHLQENERCRDQSQKRTAQQIEAIYTSGQNILVSASAGSGKTFVMVERILDKILRGVSIDRLFISTFTVKAATELRERIENKLYSQIAQTTDFQMKVYLTEQLQSLCQADIGTMDAFAQKVVSRYGYSIGISSQFRIMQDKAEQDVLKQEVFSKLFNEFMNQKEAPVFRALVKNFSGNCKDTSAFRELVYTCYSFSQSTENPKIWLQENFLSAAKTYQRLEDIPDHDIELLLLAMQDTANQLRDVTDMEDYGQLTKAGSRSAKYTKHLTIIEKLSDWVRDFKCLYGKAGLDRLIRDVTGLIPSGNDVTVSKVKYPVFKTLHQKLKQFRHLETILMYQKDCFSLLEQLQDFVLAFSEAYLAVKIQESAFEFSDIAHFAIKILEENTDIRQSYQQHYHEVMVDEYQDNNHMQERLLTLLSNGHNRFMVGDIKQSIYRFRQADPQIFNQKFRDYQKKPEQGKVILLKENFRSQSEVLNVSNAVFSHLMDESVGDVLYDEQHQLIAGSHAQTVPYLDRRAQLLLYNSDKDDGNAPSDSEGISFSEVTIVAKEIIKLHNDKGVPFEDITLLVSSRTRNDIISHTFNQYGIPIATDGGQQNYLKSVEVMVMLDTLRTINNPRNDYALVALLRSPMFAFDEDDLARIALQKDNELDKDCLYDKIQRAVIGRGAHPELIHDTLLGKLNVFLKTLKSWRRYAKLGSLYDLIWKIFNDRFYFDFVASQAKAEQAQANLYALALRANQFEKSGYKGLYRFIKMIDKVLETQNDLADVEVATPKQAVNLMTIHKSKGLQFPYVFILNCDKRFSMTDIHKSFILNRQHGIGIKYLADIKGLLGETTLNSVKVSMETLPYQLNKQELRLATLSEEMRLLYVAMTRAEKKVYFIGKASKSKSQEITDPKKLGKLLPLALREQLLTFQDWLLAIADIFSTEDLYFDVRFIEDSDLTQESVGRLQTPQLLNPDDLKDNRQSETIARALDMLEAVSQLNANYEAAIHLPTVRTPSQLKATYEPLLEPIGVDIIEKSSRSLSDFTLPHFSKKAKVEASHIGSALHQLMQVLPLSKPINQQTLLDALRGIDSNEEVKTALDLKKIESFFCDTSLGQFFQTYQKHLYREAPFAILKLDPISQEEYVLRGIIDAYFLFDDHIVLVDYKTDKYKQPIELKKRYQQQLELYAEALTQTYKLPVTKRYLVLMGGGKPEIVEV.

Residues 27–483 (HLQENERCRD…RDYQKKPEQG (457 aa)) form the UvrD-like helicase ATP-binding domain. Residue 48 to 55 (AIYTSGQN) coordinates ATP. Residues 512–798 (ESVGDVLYDE…ADVEVATPKQ (287 aa)) enclose the UvrD-like helicase C-terminal domain.

Belongs to the helicase family. AddA subfamily. In terms of assembly, heterodimer of AddA and AddB/RexB. Mg(2+) serves as cofactor.

The catalysed reaction is Couples ATP hydrolysis with the unwinding of duplex DNA by translocating in the 3'-5' direction.. The enzyme catalyses ATP + H2O = ADP + phosphate + H(+). Its function is as follows. The heterodimer acts as both an ATP-dependent DNA helicase and an ATP-dependent, dual-direction single-stranded exonuclease. Recognizes the chi site generating a DNA molecule suitable for the initiation of homologous recombination. The AddA nuclease domain is required for chi fragment generation; this subunit has the helicase and 3' -&gt; 5' nuclease activities. The protein is ATP-dependent helicase/nuclease subunit A of Streptococcus pyogenes serotype M1.